We begin with the raw amino-acid sequence, 451 residues long: Phosphoglucosamine mutase (451 aa).

Catalysis depends on serine 107, which acts as the Phosphoserine intermediate. Mg(2+) contacts are provided by serine 107, aspartate 246, aspartate 248, and aspartate 250. At serine 107 the chain carries Phosphoserine.

Belongs to the phosphohexose mutase family. Mg(2+) serves as cofactor. Post-translationally, activated by phosphorylation.

It catalyses the reaction alpha-D-glucosamine 1-phosphate = D-glucosamine 6-phosphate. Its function is as follows. Catalyzes the conversion of glucosamine-6-phosphate to glucosamine-1-phosphate. The protein is Phosphoglucosamine mutase of Azoarcus sp. (strain BH72).